Reading from the N-terminus, the 340-residue chain is Ferredoxin--NADP reductase (340 aa).

Positions 20, 39, 47, 52, 92, 126, 293, and 334 each coordinate FAD.

Belongs to the ferredoxin--NADP reductase type 2 family. As to quaternary structure, homodimer. FAD serves as cofactor.

It catalyses the reaction 2 reduced [2Fe-2S]-[ferredoxin] + NADP(+) + H(+) = 2 oxidized [2Fe-2S]-[ferredoxin] + NADPH. This Gluconobacter oxydans (strain 621H) (Gluconobacter suboxydans) protein is Ferredoxin--NADP reductase.